Here is a 143-residue protein sequence, read N- to C-terminus: Large ribosomal subunit protein uL11 (143 aa).

Belongs to the universal ribosomal protein uL11 family. In terms of assembly, part of the ribosomal stalk of the 50S ribosomal subunit. Interacts with L10 and the large rRNA to form the base of the stalk. L10 forms an elongated spine to which L12 dimers bind in a sequential fashion forming a multimeric L10(L12)X complex. One or more lysine residues are methylated.

Functionally, forms part of the ribosomal stalk which helps the ribosome interact with GTP-bound translation factors. This is Large ribosomal subunit protein uL11 from Caulobacter sp. (strain K31).